The following is a 1088-amino-acid chain: MGKYNLILSEYLSFVYNSQSAVQIPIYYSSNSELEKRCIEFHAKCVDSSKKGLSLKPLFEEYKDVIDNATLLSILSYSYDKYNAVERKLVNYAKGKPLEADLTANEIDYENNKITSELFQSAEEYTDSLMDPAILTSLSSNLNAVMFWLERHSNDVADANKIYKRRLDLFTIVASTINKYGVPRHNEKYRYEYEVMKDKPYYLVTWANSSIEMLMSVFSHEDYLIAKELIILSYSNRSTLAKLVSSPMSILVALIDINGTFITNEELELEFSDKYVKAIVPDQIFDELQEMIDNMRKAGLVDIPRMIQEWLVDCSLEKFTLMSKIYSWSFHVGFRKQKMIDAALDQLKTEYTEDVDGEMYNEYTMLIRDEIVKMLEVPVKHDDHLLRDSELAGLLSMSSASNGESRQLKFGRKTIFSTKKNMHVMDDIAHGRYTPGVIPPVNVDRPIPLGRRDVPGRRTRIIFILPYEYFIAQHAVVEKMLSYAKHTREYAEFYSQSNQLLSYGDVTRFLSSNSMVLYTDVSQWDSSQHNTQPFRKGIIMGLDMLSNMTNDPKVVQTLNLYKQTQINLMDSYVQIPDGNVIKKIQYGAVASGEKQTKAANSIANLALIKTVLSRIANKYSFITKIIRVDGDDNYAVLQFNTDVTKQMVQDVSNDVRYIYSRMNAKVKALVSTVGIEIAKRYIAGGKIFFRAGINLLNNEKRGQSTQWDQAAILYSNYIVNKLRGFETDREFILTKIIQMTSVAITGSLRLFPSERVLTTNSTFKVFDSEDFIIEYGTTNDEVYIQRAFMSLSSQKSGIADEIASSQTFKNYVNKLSDQLLISKNVIVSKGIAVTEKAKLNSYAPVYLEKRRAQISALLTMLQKPVSFKSNKITINDILRDIKPFFITSEANLPIQYRKFMPTLPNNVQYVIQCIGSRTYQIEDSGSKSSISKLISKYSVYKPSIEELYKVISLREQEIQLYLVSLGVPPVDAGTYVGSRIYSQDKYKILESYVYNLLSINYGCYQLFNFNSPDLEKLIRIPFKGKIPAVTFILHLYAKLEIINYAIKNGAWISLFCNYPKSEMIKLWKKMWNITALRSPYTSANFFQD.

The 187-residue stretch at 501-687 (LSYGDVTRFL…AKRYIAGGKI (187 aa)) folds into the RdRp catalytic domain.

This sequence belongs to the reoviridae RNA-directed RNA polymerase family. As to quaternary structure, interacts with VP3 (Potential). Interacts with VP2; this interaction activates VP1. Interacts with NSP5; this interaction is probably necessary for the formation of functional virus factories. Interacts with NSP2; this interaction is weak. The cofactor is Mg(2+).

The protein localises to the virion. The catalysed reaction is RNA(n) + a ribonucleoside 5'-triphosphate = RNA(n+1) + diphosphate. Its function is as follows. RNA-directed RNA polymerase that is involved in both transcription and genome replication. Together with VP3 capping enzyme, forms an enzyme complex positioned near the channels situated at each of the five-fold vertices of the core. Following infection, the outermost layer of the virus is lost, leaving a double-layered particle (DLP) made up of the core and VP6 shell. VP1 then catalyzes the transcription of fully conservative plus-strand genomic RNAs that are extruded through the DLP's channels into the cytoplasm where they function as mRNAs for translation of viral proteins. One copy of each of the viral (+)RNAs is also recruited during core assembly, together with newly synthesized polymerase complexes and VP2. The polymerase of these novo-formed particles catalyzes the synthesis of complementary minus-strands leading to dsRNA formation. To do so, the polymerase specifically recognizes and binds 4 bases 5'-UGUG-3' in the conserved 3'-sequence of plus-strand RNA templates. VP2 presumably activates the autoinhibited VP1-RNA complex to coordinate packaging and genome replication. Once dsRNA synthesis is complete, the polymerase switches to the transcriptional mode, thus providing secondary transcription. This is RNA-directed RNA polymerase from Rotavirus A (strain RVA/Human/United States/Wa/1974/G1P1A[8]) (RV-A).